Consider the following 388-residue polypeptide: Chorismate synthase (388 aa).

2 residues coordinate NADP(+): Arg-39 and Arg-45. FMN contacts are provided by residues 130–132, 251–252, Gly-296, 311–315, and Arg-337; these read RSS, NA, and KPIPT.

It belongs to the chorismate synthase family. In terms of assembly, homotetramer. FMNH2 is required as a cofactor.

The enzyme catalyses 5-O-(1-carboxyvinyl)-3-phosphoshikimate = chorismate + phosphate. It participates in metabolic intermediate biosynthesis; chorismate biosynthesis; chorismate from D-erythrose 4-phosphate and phosphoenolpyruvate: step 7/7. Catalyzes the anti-1,4-elimination of the C-3 phosphate and the C-6 proR hydrogen from 5-enolpyruvylshikimate-3-phosphate (EPSP) to yield chorismate, which is the branch point compound that serves as the starting substrate for the three terminal pathways of aromatic amino acid biosynthesis. This reaction introduces a second double bond into the aromatic ring system. The polypeptide is Chorismate synthase (Streptococcus pyogenes serotype M49 (strain NZ131)).